Here is a 187-residue protein sequence, read N- to C-terminus: Holliday junction branch migration complex subunit RuvA (187 aa).

Positions 1–64 are domain I; that stretch reads MIEYVRGIIE…EDGFQIFGFK (64 aa). Positions 65-136 are domain II; that stretch reads TKEELDLFEK…ELKDKLPKEI (72 aa). Residues 136-139 form a flexible linker region; that stretch reads IVFE. The domain III stretch occupies residues 140-187; that stretch reads GDNNFSNEALEALLALGYTKSEAIYALADITCDSVEDAVKQALKKLMK.

The protein belongs to the RuvA family. In terms of assembly, homotetramer. Forms an RuvA(8)-RuvB(12)-Holliday junction (HJ) complex. HJ DNA is sandwiched between 2 RuvA tetramers; dsDNA enters through RuvA and exits via RuvB. An RuvB hexamer assembles on each DNA strand where it exits the tetramer. Each RuvB hexamer is contacted by two RuvA subunits (via domain III) on 2 adjacent RuvB subunits; this complex drives branch migration. In the full resolvosome a probable DNA-RuvA(4)-RuvB(12)-RuvC(2) complex forms which resolves the HJ.

The protein localises to the cytoplasm. In terms of biological role, the RuvA-RuvB-RuvC complex processes Holliday junction (HJ) DNA during genetic recombination and DNA repair, while the RuvA-RuvB complex plays an important role in the rescue of blocked DNA replication forks via replication fork reversal (RFR). RuvA specifically binds to HJ cruciform DNA, conferring on it an open structure. The RuvB hexamer acts as an ATP-dependent pump, pulling dsDNA into and through the RuvAB complex. HJ branch migration allows RuvC to scan DNA until it finds its consensus sequence, where it cleaves and resolves the cruciform DNA. This chain is Holliday junction branch migration complex subunit RuvA, found in Thermoanaerobacter pseudethanolicus (strain ATCC 33223 / 39E) (Clostridium thermohydrosulfuricum).